The sequence spans 948 residues: MKYLASFRTTLKVSRYLFRALALLIWLLIAFVSVFYIVNALHQRESEIRQEFNLSSDQAQRFIQRTSDVMKELKYIAENRLTAENGVMSSRARDDKMVVPDFEPLFADSDCAAMGSAWRGSLESLAWFMRYWRDNFSAAYDLNRVFLIGSDNLCMANFGLREMPVERDDALKALHERIMKYRNAPQEESGNNLFWISQGARQGVGYFYALTPVYLANRLQALLGVEQSIRMENFFTPGSLPMGVTIIDENGHSLISLTGPDGIIKAEPRWMQERSWFGYTPGFRELVLKKSLPPSSLSIVYSVPVDLVLERIRILILNAILLNVLVGAGLFTLARMYERRIFIPAESDAQRLEEHEQFNRKIVASAPVGICILRTIDGVNILSNELAHTYLNMLTHEDRQRLTQIICGQQVNFVDVLTSNNTNLQISFVHSRYRNENVAICVLVDVSTRVKMEESLQEMAQAAEQASQSKSMFLATVSHELRTPLYGIIGNLDLLQTKELPKGVDRLVTAMNNSSSLLLKIISDILDFSKIESEQLKIEPREFSPREVMNHITANYLPLVVRKQLGLYCFIEPDVPVSLNGDPMRLQQVISNLLSNAIKFTDIGCIVLHVRCDGDYLSIRVRDTGVGIPAKEVVRLFDPFFQVGTGVQRNFQGTGLGLAICEKLISMMDGDISVDSEPGMGSQFTLRIPLYGAQYPVKKSVEGLAGTCCWLAVRNTSLCQFIETSLARSGVHTQRYEGQEPAADDILIVDDALEHTWQGRAAVVFCRRHIGIPLERAPGEWVHSVASVHELPALLARIYSIELDSEALSSALPTTDKTADSNDDMMILVVDDHPINRRLLADQLGSLGYQCKTANDGVDALNVLSKNAIDIVLSDVNMPNMDGYRLTQRIRQLGLTLPVVGVTANALAEEKQRCLESGMDSCLSKPVTLDALKQTLAVYAERVRKTRA.

The Cytoplasmic portion of the chain corresponds to 1-20; that stretch reads MKYLASFRTTLKVSRYLFRA. The chain crosses the membrane as a helical span at residues 21–41; that stretch reads LALLIWLLIAFVSVFYIVNAL. The Periplasmic segment spans residues 42–313; it reads HQRESEIRQE…PVDLVLERIR (272 aa). A helical membrane pass occupies residues 314 to 334; it reads ILILNAILLNVLVGAGLFTLA. The Cytoplasmic segment spans residues 335-948; it reads RMYERRIFIP…YAERVRKTRA (614 aa). The PAS domain maps to 357–425; it reads QFNRKIVASA…VLTSNNTNLQ (69 aa). Residues 476–692 form the Histidine kinase domain; it reads TVSHELRTPL…QFTLRIPLYG (217 aa). Position 479 is a phosphohistidine; by autocatalysis (His-479). Residues 705–805 enclose the ABL domain; the sequence is AGTCCWLAVR…ARIYSIELDS (101 aa). One can recognise a Response regulatory domain in the interval 826–940; sequence MILVVDDHPI…ALKQTLAVYA (115 aa). Asp-875 bears the 4-aspartylphosphate mark.

It belongs to the RcsC family. As to quaternary structure, interacts with RcsD. In terms of processing, autophosphorylated. Activation probably requires a transfer of a phosphate group from a His in the transmitter domain to an Asp in the receiver domain.

It localises to the cell inner membrane. It carries out the reaction ATP + protein L-histidine = ADP + protein N-phospho-L-histidine.. In terms of biological role, component of the Rcs signaling system, which controls transcription of numerous genes. RcsC functions as a membrane-associated protein kinase that phosphorylates RcsD in response to environmental signals. The phosphoryl group is then transferred to the response regulator RcsB. The sequence is that of Sensor histidine kinase RcsC from Salmonella typhi.